Consider the following 552-residue polypeptide: Hyaluronan synthase 2 (552 aa).

Residues 1–11 (MHCERFLCILR) are Cytoplasmic-facing. Residues 12 to 32 (IIGTTLFGVSLLLGITAAYIV) traverse the membrane as a helical segment. Residues 33-45 (GYQFIQTDNYYFS) are Extracellular-facing. The chain crosses the membrane as a helical span at residues 46–66 (FGLYGAFLASHLIIQSLFAFL). Over 67–374 (EHRKMKKSLE…NAMWFHKHHL (308 aa)) the chain is Cytoplasmic. Phosphothreonine is present on threonine 110. Lysine 190 is covalently cross-linked (Glycyl lysine isopeptide (Lys-Gly) (interchain with G-Cter in ubiquitin)). A glycan (O-linked (GlcNAc) serine) is linked at serine 221. A Phosphothreonine modification is found at threonine 328. The chain crosses the membrane as a helical span at residues 375 to 395 (WMTYEAIITGFFPFFLIATVI). Topologically, residues 396 to 402 (QLFYRGK) are extracellular. Residues 403-423 (IWNILLFLLTVQLVGLIKSSF) traverse the membrane as a helical segment. The Cytoplasmic portion of the chain corresponds to 424–429 (ASCLRG). A helical transmembrane segment spans residues 430-450 (NIVMVFMSLYSVLYMSSLLPA). At 451 to 475 (KMFAIATINKAGWGTSGRKTIVVNF) the chain is on the extracellular side. A helical membrane pass occupies residues 476–496 (IGLIPVSVWFTILLGGVIFTI). The Cytoplasmic portion of the chain corresponds to 497–510 (YKESKRPFSESKQT). The helical transmembrane segment at 511–531 (VLIVGTLLYACYWVMLLTLYV) threads the bilayer. Residues 532–552 (VLINKCGRRKKGQQYDMVLDV) lie on the Extracellular side of the membrane.

It belongs to the NodC/HAS family. As to quaternary structure, homodimer; dimerization promotes enzymatic activity. Forms heterodimer with HAS3. Forms heterodimer with HAS1. It depends on Mg(2+) as a cofactor. In terms of processing, phosphorylation at Thr-328 is essential for hyaluronan synthase activity. Phosphorylation at Thr-110 is required for transport from ER to Golgi. Post-translationally, O-GlcNAcylation at Ser-221 increases the stability of HAS2 and plasma membrane localization. Ubiquitination at Lys-190; this ubiquitination is essential for hyaluronan synthase activity and homo- or hetero-oligomerization. Can also be poly-ubiquitinated. Deubiquitinated by USP17 and USP4. USP17 efficiently removes 'Lys-63'- and 'Lys-48'-linked polyubiquitin chains, whereas USP4 preferentially removes monoubiquitination and, partially, both 'Lys-63'- and 'Lys-48'-linked polyubiquitin chain. Expressed in fibroblasts.

It is found in the cell membrane. The protein resides in the endoplasmic reticulum membrane. Its subcellular location is the vesicle. It localises to the golgi apparatus membrane. The protein localises to the lysosome. It carries out the reaction [hyaluronan](n) + UDP-N-acetyl-alpha-D-glucosamine = N-acetyl-beta-D-glucosaminyl-(1-&gt;4)-[hyaluronan](n) + UDP + H(+). The enzyme catalyses N-acetyl-beta-D-glucosaminyl-(1-&gt;4)-[hyaluronan](n) + UDP-alpha-D-glucuronate = [hyaluronan](n+1) + UDP + H(+). Its pathway is glycan biosynthesis; hyaluronan biosynthesis. With respect to regulation, regulated by several post-translational modifications such as ubiquitination/deubiquitination, phosphorylation and O-GlcNAcylation. The enzymatic activity depends on the availability of UDP-GlcUA and UDP-GlcNAc. Its function is as follows. Catalyzes the addition of GlcNAc or GlcUA monosaccharides to the nascent hyaluronan polymer. Therefore, it is essential to hyaluronan synthesis a major component of most extracellular matrices that has a structural role in tissues architectures and regulates cell adhesion, migration and differentiation. This is one of three isoenzymes responsible for cellular hyaluronan synthesis and it is particularly responsible for the synthesis of high molecular mass hyaluronan. In Homo sapiens (Human), this protein is Hyaluronan synthase 2.